Consider the following 253-residue polypeptide: 5'/3'-nucleotidase SurE (253 aa).

Residues Asp8, Asp9, Ser39, and Asn92 each contribute to the a divalent metal cation site.

The protein belongs to the SurE nucleotidase family. The cofactor is a divalent metal cation.

Its subcellular location is the cytoplasm. It carries out the reaction a ribonucleoside 5'-phosphate + H2O = a ribonucleoside + phosphate. It catalyses the reaction a ribonucleoside 3'-phosphate + H2O = a ribonucleoside + phosphate. The enzyme catalyses [phosphate](n) + H2O = [phosphate](n-1) + phosphate + H(+). Nucleotidase with a broad substrate specificity as it can dephosphorylate various ribo- and deoxyribonucleoside 5'-monophosphates and ribonucleoside 3'-monophosphates with highest affinity to 3'-AMP. Also hydrolyzes polyphosphate (exopolyphosphatase activity) with the preference for short-chain-length substrates (P20-25). Might be involved in the regulation of dNTP and NTP pools, and in the turnover of 3'-mononucleotides produced by numerous intracellular RNases (T1, T2, and F) during the degradation of various RNAs. This chain is 5'/3'-nucleotidase SurE, found in Salmonella paratyphi B (strain ATCC BAA-1250 / SPB7).